Reading from the N-terminus, the 379-residue chain is Queuine tRNA-ribosyltransferase (379 aa).

Residue aspartate 94 is the Proton acceptor of the active site. Substrate contacts are provided by residues 94 to 98 (DSGGF), aspartate 148, glutamine 191, and glycine 218. Residues 249–255 (GVGSPDS) form an RNA binding region. Residue aspartate 268 is the Nucleophile of the active site. Positions 273 to 277 (TRIAR) are RNA binding; important for wobble base 34 recognition. Zn(2+) contacts are provided by cysteine 306, cysteine 308, cysteine 311, and histidine 337.

It belongs to the queuine tRNA-ribosyltransferase family. Homodimer. Within each dimer, one monomer is responsible for RNA recognition and catalysis, while the other monomer binds to the replacement base PreQ1. The cofactor is Zn(2+).

It carries out the reaction 7-aminomethyl-7-carbaguanine + guanosine(34) in tRNA = 7-aminomethyl-7-carbaguanosine(34) in tRNA + guanine. It participates in tRNA modification; tRNA-queuosine biosynthesis. In terms of biological role, catalyzes the base-exchange of a guanine (G) residue with the queuine precursor 7-aminomethyl-7-deazaguanine (PreQ1) at position 34 (anticodon wobble position) in tRNAs with GU(N) anticodons (tRNA-Asp, -Asn, -His and -Tyr). Catalysis occurs through a double-displacement mechanism. The nucleophile active site attacks the C1' of nucleotide 34 to detach the guanine base from the RNA, forming a covalent enzyme-RNA intermediate. The proton acceptor active site deprotonates the incoming PreQ1, allowing a nucleophilic attack on the C1' of the ribose to form the product. After dissociation, two additional enzymatic reactions on the tRNA convert PreQ1 to queuine (Q), resulting in the hypermodified nucleoside queuosine (7-(((4,5-cis-dihydroxy-2-cyclopenten-1-yl)amino)methyl)-7-deazaguanosine). In Bacillus cereus (strain G9842), this protein is Queuine tRNA-ribosyltransferase.